The sequence spans 641 residues: ATP-dependent zinc metalloprotease FtsH 2 (641 aa).

Residues 1–100 are Periplasmic-facing; the sequence is MLAYYVSVNQ…IDVKVIHNFW (100 aa). The chain crosses the membrane as a helical span at residues 101 to 121; that stretch reads GQAFLSVLPFLLFILALYFLF. Over 122–641 the chain is Cytoplasmic; the sequence is RQQIRMAGRG…LLPGLEGAPA (520 aa). 193–200 contributes to the ATP binding site; that stretch reads GPPGTGKT. H415 provides a ligand contact to Zn(2+). E416 is a catalytic residue. Zn(2+) contacts are provided by H419 and D491. Residues 593–641 are disordered; the sequence is KTGKMTNPPSKNSSPVSNGGEASSTKSPARQEETTKDGGLLPGLEGAPA. Low complexity-rich tracts occupy residues 599 to 610 and 630 to 641; these read NPPSKNSSPVSN and GGLLPGLEGAPA.

The protein in the central section; belongs to the AAA ATPase family. In the C-terminal section; belongs to the peptidase M41 family. Homohexamer. Zn(2+) is required as a cofactor.

Its subcellular location is the cell inner membrane. Functionally, acts as a processive, ATP-dependent zinc metallopeptidase for both cytoplasmic and membrane proteins. Plays a role in the quality control of integral membrane proteins. The protein is ATP-dependent zinc metalloprotease FtsH 2 of Methylacidiphilum infernorum (isolate V4) (Methylokorus infernorum (strain V4)).